The chain runs to 550 residues: Carboxypeptidase Y homolog A (550 aa).

Residues methionine 1 to proline 18 form the signal peptide. Positions leucine 19–lysine 131 are excised as a propeptide. The tract at residues glutamine 20–valine 39 is disordered. Disulfide bonds link cysteine 185–cysteine 424, cysteine 319–cysteine 333, cysteine 343–cysteine 366, cysteine 350–cysteine 359, and cysteine 388–cysteine 394. Residues asparagine 203 and asparagine 216 are each glycosylated (N-linked (GlcNAc...) asparagine). Serine 272 is a catalytic residue. N-linked (GlcNAc...) asparagine glycosylation is present at asparagine 289. An N-linked (GlcNAc...) asparagine glycan is attached at asparagine 387. The active site involves aspartate 463. Residues asparagine 493 and asparagine 514 are each glycosylated (N-linked (GlcNAc...) asparagine). The active site involves histidine 525.

The protein belongs to the peptidase S10 family.

Its subcellular location is the vacuole. It carries out the reaction Release of a C-terminal amino acid with broad specificity.. Vacuolar carboxypeptidase involved in degradation of small peptides. Digests preferentially peptides containing an aliphatic or hydrophobic residue in P1' position, as well as methionine, leucine or phenylalanine in P1 position of ester substrate. This is Carboxypeptidase Y homolog A (CPYA) from Paracoccidioides brasiliensis (strain Pb18).